Here is a 443-residue protein sequence, read N- to C-terminus: Probable ribonuclease FAU-1 (443 aa).

It belongs to the FAU-1 family.

Its function is as follows. Probable RNase involved in rRNA stability through maturation and/or degradation of precursor rRNAs. Binds to RNA in loop regions with AU-rich sequences. The protein is Probable ribonuclease FAU-1 of Pyrobaculum aerophilum (strain ATCC 51768 / DSM 7523 / JCM 9630 / CIP 104966 / NBRC 100827 / IM2).